Consider the following 39-residue polypeptide: Cytochrome b559 subunit beta (39 aa).

A helical membrane pass occupies residues 14–30 (WLAVHGLAVPTVFFLGS). Position 18 (H18) interacts with heme.

The protein belongs to the PsbE/PsbF family. As to quaternary structure, heterodimer of an alpha subunit and a beta subunit. PSII is composed of 1 copy each of membrane proteins PsbA, PsbB, PsbC, PsbD, PsbE, PsbF, PsbH, PsbI, PsbJ, PsbK, PsbL, PsbM, PsbT, PsbX, PsbY, PsbZ, Psb30/Ycf12, at least 3 peripheral proteins of the oxygen-evolving complex and a large number of cofactors. It forms dimeric complexes. It depends on heme b as a cofactor.

It is found in the plastid membrane. This b-type cytochrome is tightly associated with the reaction center of photosystem II (PSII). PSII is a light-driven water:plastoquinone oxidoreductase that uses light energy to abstract electrons from H(2)O, generating O(2) and a proton gradient subsequently used for ATP formation. It consists of a core antenna complex that captures photons, and an electron transfer chain that converts photonic excitation into a charge separation. The sequence is that of Cytochrome b559 subunit beta from Cuscuta europaea (European dodder).